A 416-amino-acid chain; its full sequence is MSTNTVPSSPPNQTPPAASGIATSHDHTKFNNPIRLPISISLTINDTPNNNSNNNSVSNGLGILPSRTATSLVVANNGSANGNVGATAAAAATVETNTAPAVNTTKSIRHFIYPPNQVNQTEFSLDIHLPPNTSLPERIDQSTLKRRMDKHGLFSIRLTPFIDTSSTSVANQGLFFDPIIRTAGAGSQIIIGRYTERVREAISKIPDQYHPVVFKSKVISRTHGCFKVDDQGNWFLKDVKSSSGTFLNHQRLSSASTTSKDYLLHDGDIIQLGMDFRGGTEEIYRCVKMKIELNKSWKLKANAFNKEALSRIKNLQKLTTGLEQEDCSICLNKIKPCQAIFISPCAHSWHFHCVRRLVIMNYPQFMCPNCRTNCDLETTLESESESEFENEDEDEPDIEMDIDMEINNNLGVRLVD.

Positions 1–30 (MSTNTVPSSPPNQTPPAASGIATSHDHTKF) are disordered. Residues Lys-150, Lys-204, Lys-217, Lys-237, Lys-240, Lys-260, Lys-300, Lys-306, Lys-313, and Lys-317 each participate in a glycyl lysine isopeptide (Lys-Gly) (interchain with G-Cter in ubiquitin) cross-link. The FHA domain maps to 189–252 (IIIGRYTERV…SGTFLNHQRL (64 aa)). The RING-type zinc finger occupies 327-371 (CSICLNKIKPCQAIFISPCAHSWHFHCVRRLVIMNYPQFMCPNCR).

The protein belongs to the DMA1 family. As to quaternary structure, interacts with CDC123. Interacts with PCL1. UBC4-dependent autoubiquitination occurs at Lys-150, Lys-204, Lys-217, Lys-237, Lys-240, Lys-260, Lys-300, Lys-306, Lys-313 and Lys-317. UBC4-dependent autoubiquitination is responsible for DMA2 turnover. UBC13/MMS2-dependent autoubiquitination occurs at Lys-237 and Lys-306. Lys-204 and Lys-306 are also ubiquitinated in trans by DMA2 E3 ligase in association with UBC4.

The protein localises to the cytoplasm. The catalysed reaction is S-ubiquitinyl-[E2 ubiquitin-conjugating enzyme]-L-cysteine + [acceptor protein]-L-lysine = [E2 ubiquitin-conjugating enzyme]-L-cysteine + N(6)-ubiquitinyl-[acceptor protein]-L-lysine.. Functionally, E3 ubiquitin-protein ligase which functions in cell cycle retarding in conjunction with the UBC4 and UBC13/MMS2 complex, 2 E2 ubiquitin conjugating enzymes. Involved in nutritional control of the cell cycle. Targets the G1 cyclin PCL1 for destruction. Required for proper spindle positioning, likely regulating septin ring deposition at the bud neck. The protein is E3 ubiquitin-protein ligase DMA1 of Saccharomyces cerevisiae (strain ATCC 204508 / S288c) (Baker's yeast).